Consider the following 429-residue polypeptide: 3-phosphoshikimate 1-carboxyvinyltransferase (429 aa).

3 residues coordinate 3-phosphoshikimate: Lys22, Ser23, and Arg27. Lys22 serves as a coordination point for phosphoenolpyruvate. Positions 94 and 122 each coordinate phosphoenolpyruvate. Residues Ser167, Gln169, Asp315, and Lys342 each contribute to the 3-phosphoshikimate site. Gln169 contributes to the phosphoenolpyruvate binding site. Asp315 (proton acceptor) is an active-site residue. Arg346 and Arg388 together coordinate phosphoenolpyruvate.

It belongs to the EPSP synthase family. In terms of assembly, monomer.

The protein resides in the cytoplasm. It catalyses the reaction 3-phosphoshikimate + phosphoenolpyruvate = 5-O-(1-carboxyvinyl)-3-phosphoshikimate + phosphate. Its pathway is metabolic intermediate biosynthesis; chorismate biosynthesis; chorismate from D-erythrose 4-phosphate and phosphoenolpyruvate: step 6/7. Its function is as follows. Catalyzes the transfer of the enolpyruvyl moiety of phosphoenolpyruvate (PEP) to the 5-hydroxyl of shikimate-3-phosphate (S3P) to produce enolpyruvyl shikimate-3-phosphate and inorganic phosphate. In Geobacter sulfurreducens (strain ATCC 51573 / DSM 12127 / PCA), this protein is 3-phosphoshikimate 1-carboxyvinyltransferase.